We begin with the raw amino-acid sequence, 2058 residues long: MIVDLIQSARQGEWAQVRQLLLKHWLVQVPEVFEVNSDLPWDNTAANERILGSQGEILLAPLVSAFVLDVRNTKSTLEAMNGIAGVDPARRGQICGHVFKNGELTYTCLDCATDGTCVMCLQCFEVSIHKSHKYKMHSSSGSGYCDCGDADAWTEGYACANHEKKDDEEAAVLAPELKKRCEQLVEIILQFSLSMITHKDDLKLPEIFEKMKPEVTNEAQQYLTVLYNDETHTYESVIKVLELYIHCTKDQAMLVATIVDREGRSAVKLGSKADCTKAKDDVQRKTARDPTSIRRSSNHNLPLSVKVMDTTLFALQNFSISLLTWLNTQMDVFPPLREIVGEILLSSKFALKKNYTRKMKSEDQRLVAGIIRNVMVLPDDEEEELFALDGRMDVDEMDDDDIGGEALQMEIDADDEEEITAALAGVSEHQESPGPSRDSSTFTMLENILLQDTQMWKAGRSILHQMLMRTVFMIYDQKVRFAKAFMLHYNEIYEDFIKDDHEMDVSVVGLSVQFMTVPSLARKLVAEDQAFSVISKAIRDQTDKFVKYYNDGKIARFDFTSRSFPPELRRSLHITRDMAYILNAVPSESDWNRELIDGFVQGFADFLLFLQHLQGMDEVKRQAVEHQVWESEWETAFNILLRLKDAISMIIGWAETNEEVHNRLMIMCLELMNRMPPVYTKSEEDTYELTVTINGESCRISHFDVLKSSTSVHQPVVRIIAGLFSASNYTGFLLNRSNNSHTSLNQERIKELINCKDETNLYELSLRVLVLCAQSNATLWRRNGFSLINQIHNYFSPLCRNEMFDRDVLMMQVGAALTPSTKFIFHLLHRFRLFKWATSEFEQDKANEKPAKPESEDLSKTLVMIAEEFIQCLILILCERYTYGVGKTRPMDQMKREVIHILCTGSHTFSHIQQKMSHDINSKRLSLHEAVNLVADFRKPLATTAGQFHCKESSLPTYSPFFMHYSKSDQSAAEQSQARVRAKMEKSVRACAPPILPDFQTFFERIPEILTTNVLIHVVRLIIDRTARRSRFSSDRLFHKTLYLIGIALNEEEKNPSFGFTQRAEESIGLLSLLEGLVGKPESSICPILLEVTVEKYRKLIKARAGVPEAAPAPENKPAQSEEEIKAKRAARAAEMRQKAMAKMSNMQSKFMKKIEDEEKKDESQTPSEKSETVVKKDDYDNKHFFDEDVVKQVGHDFPVCIGANKWHAELVKPRTLTCILCQEDEIIAPQQGKPMVCAAFIQQSQLFTHKNKNGELMTASSGTISTRDLLTAPATLQYGVDVSTCSHSMHYECYRSLAEANRSRESLRARQVGQHSHKMVDTENGEYQCPLCKRLSNAAIPVLPAYQLTNQNGFSTVSGAGKENFDTWVARVKRNLEMPLSSESVSKKGHSRKRSHSERSLLDLEKLSKDPDTANTSAGVLQFGAMEMSSATHMPASAESQMLMTTSPSQDDVEFYNELAAMFVDQDVNNTTSPAATPETIPAIGSSSRIPESQESGKKPLSSQIQHVLYSLIRPFPALINSNRICSSSFEGFEEPIKDLGKNMMKFRKRGNELKTNFIEKHLKGYVISTVTWQSTAHVARAISSYLHYDKKPLFGALNTRQRDCLSAMARLCASLSHNMQFLLHAVSDMLRVFLCEPPRPKLAQTPGSPLLSAPSTSSFTPAPAQIPHSGTNFAFLVQLFNPAGPRKNVNLNILQIDILSLAISLMMTIGWTWNNGTQSMNSSSTHQKARLLTPDGSVDEAYVLRLSLLAHYFQIIATHSEADGNDVNMEEEQESQMEVDPVAAQTIRKLYALCHPFDGPLRRVDILWRKMEEGAQSLLRPIALLYHFITLVDPPEALKDPSINSSEPLFRYLGLPHKIEEQISGSMLEKLFTMWSSSIPSDQALRQDLVVQPVRPNLLVELPEKYSQLINQVATFKCPTIPIEESTSNVPTLCLVCGTILCSQAYCCQKIINKQSYGACRYHMSQCSGSVGMFLRVRDCSLVLMTTRKRGCFRPAPYVDEFGEVDQGFRRGNPLHLNPELYQKLKSLWLQQGITEEVVNYNEIDFRNVQYDWGHF.

The UBR-type zinc finger occupies 93–164 (QICGHVFKNG…EGYACANHEK (72 aa)). Residues 1107–1175 (VPEAAPAPEN…TPSEKSETVV (69 aa)) form a disordered region. Residues 1108 to 1119 (PEAAPAPENKPA) are compositionally biased toward low complexity. Composition is skewed to basic and acidic residues over residues 1123–1138 (EEIK…EMRQ) and 1153–1175 (KKIE…ETVV). Residues 1217–1335 (LTCILCQEDE…GEYQCPLCKR (119 aa)) form an RING-type; atypical zinc finger. Disordered regions lie at residues 1381–1416 (LSSE…DTAN) and 1475–1499 (PAAT…ESGK). Basic residues predominate over residues 1388–1397 (KKGHSRKRSH). Over residues 1398 to 1413 (SERSLLDLEKLSKDPD) the composition is skewed to basic and acidic residues. A compositionally biased stretch (polar residues) spans 1486-1495 (GSSSRIPESQ). The chain crosses the membrane as a helical span at residues 1695-1715 (ILQIDILSLAISLMMTIGWTW).

The protein belongs to the E3 ubiquitin-protein ligase UBR1-like family. Interacts with ubc-1. Component of a complex containing at least ced-3, ubr-1 and possibly ate-1. Within complex interacts with ced-3 (via the p17 subunit); this interaction is required for the ced-3-mediated cleavage and subsequent degradation of the heterochronic protein lin-28. Expressed in pharyngeal muscles, body wall muscles and a subset of neurons throughout postembryonic development. Prominently expressed in premotor interneurons, but not expressed in ventral cord motor neurons. Weakly expressed in hypodermal seam cells.

The protein resides in the membrane. It carries out the reaction S-ubiquitinyl-[E2 ubiquitin-conjugating enzyme]-L-cysteine + [acceptor protein]-L-lysine = [E2 ubiquitin-conjugating enzyme]-L-cysteine + N(6)-ubiquitinyl-[acceptor protein]-L-lysine.. The protein operates within protein modification; protein ubiquitination. Functionally, E3 ubiquitin-protein ligase which is a component of the N-end rule pathway. Recognizes and binds to proteins bearing specific N-terminal residues that are destabilizing according to the N-end rule, leading to their ubiquitination and subsequent degradation. In complex with ced-3, required for the ced-3-mediated cleavage and subsequent degradation of the heterochronic protein lin-28 to regulate seam cell fate patterning during larval development. Negatively regulates glutamate metabolism through the aspartate aminotransferase got-1.2. Modulation of glutamate levels most likely controls locomotory behavior, in particular backwards locomotion or 'reversals'. The chain is E3 ubiquitin-protein ligase ubr-1 from Caenorhabditis elegans.